The chain runs to 1405 residues: MHMKIKKFKKIKKKSKILVKAKLIAQQVENNREEYSALSIEDLRIRTDYLVDGLAKDKFTLEDIIVDALSIAREIIYREHGMLAYEVQMMGAYVVHTGDFAEMYTGEGKSLTLLLVSFVNALTKRGVHIVTVNEYLVERDALFAQKAFEKLGITVGYNTSKLSKATKKEMFARDITYTTNSELGFDYLKDNMVRDINEKVIRELFFVIVDEADSVLIDEARTPLIISGQPKEDFSLYLDIDKFVGSLAEDDYKIDNESNTIALTDQGVSKAEKFFNLTNLYSVESAEIVHKITNSLVAHYIFANGKEYLVKDDKIYLVDQFTGRVLEGRSYNAGLQQAIQAKERVTIEPENVVMATITYQSFFRLYEKLSGVSGTAMTEAEEFLKIYNMVVVRIPTNKPVARIDKQDYIFGTKRVKWNHVIQEIVNRHETGQPILVGTASVTDSEIIHERLTELKIPHEVLNARDNTKEAEIVKHAGEKGAITISTNMAGRGTDIKVSDEIRELGGLYVIGTERHESRRIDNQLRGRTGRQGDPGESRFFTSLEDALFKRFATDRFEKASQKLEEEFYDSRFFSKMLDRTQKKVEGLNFDIRKNLMDYDHVLSLQRELIYKQRDQILLKTNNLNIINNMIDDYVETEILNFKNNDNTSLVDANKIVAFLNEKILKFSYFTPATFANMPILLAIDKAISIIKKVVDVKCKILEKINGLNVIDEILLVNLDQKWTTHIDKMTKLREGVNLRSLEQRSPLNIYIEDGNNLFERMKINVVTDTITSICNLSLPNEMIEITNALDEFVNSEEFKKKNYGNQREIEQNFNSALSFSGSATSEFDNFIESELENTLIEETPEEYVEVEEYIPQQTEPEVVETETTPYGFEIPKYDTSGTDKYELNNGSSEVNILENESDIFENSFSQIQNTFNTEELDPQETPHTAKADDQFVFESANLEDDIEEIENVSNIDKAPEIQQPLSEEEIQKILDMPAFKDDEKPLTIGNYLDNILDSMDIDYDQDKEITQQLEPSSNEQEVTANIPEQNQLDITTSDIDNEIELLDESERESIKEEIQKSISFDLSNDPDFIEYRNSVFVNKNNGIDYSDYKKLNEDESDDDIKAFYKLPKVDKKEPGTLFGGNLLKKTPFNFKNKNELDNEKIKSTNLFREENQASEQELNTLLQLDDEKDRLEKINQLLNKEDPEVLERKELERQVEFETPVYYLEDIPEGESLDNFKAMDNPHEEQSFEDNLVDEENQQLEFEEALDEVIDDGQFNDEVEAAELSEEVLEEVINPNPEELSEEDKWLITKKEHEKFMEKYLGDVKELTSENPEVVTALLQEKNKNLKDVEIIENNEELENTNEEEPNINSQDSFLNNIKIIKTVDKESEDETEIIQEINQPAEIHNLQKDILDYLKENNKK.

The tract at residues methionine 1–glutamate 1099 is protein translocase subunit SecA. ATP-binding positions include glutamine 88, glycine 106–serine 110, and aspartate 494. Residues serine 1100–lysine 1405 form a unknown region.

It belongs to the SecA family. Monomer and homodimer. Part of the essential Sec protein translocation apparatus which comprises SecA, SecYEG and auxiliary proteins SecDF. Other proteins may also be involved.

The protein localises to the cell membrane. It is found in the cytoplasm. The catalysed reaction is ATP + H2O + cellular proteinSide 1 = ADP + phosphate + cellular proteinSide 2.. Its function is as follows. Part of the Sec protein translocase complex. Interacts with the SecYEG preprotein conducting channel. Has a central role in coupling the hydrolysis of ATP to the transfer of proteins into and across the cell membrane, serving as an ATP-driven molecular motor driving the stepwise translocation of polypeptide chains across the membrane. This is Protein translocase subunit SecA from Malacoplasma penetrans (strain HF-2) (Mycoplasma penetrans).